The sequence spans 929 residues: Isoleucine--tRNA ligase (929 aa).

A 'HIGH' region motif is present at residues 57–67 (PYANGNIHVGH). An L-isoleucyl-5'-AMP-binding site is contributed by Glu554. The 'KMSKS' region motif lies at 595–599 (KMSKS). Lys598 is an ATP binding site. Zn(2+) contacts are provided by Cys888, Cys891, Cys908, and Cys911.

This sequence belongs to the class-I aminoacyl-tRNA synthetase family. IleS type 1 subfamily. Monomer. The cofactor is Zn(2+).

It localises to the cytoplasm. The catalysed reaction is tRNA(Ile) + L-isoleucine + ATP = L-isoleucyl-tRNA(Ile) + AMP + diphosphate. In terms of biological role, catalyzes the attachment of isoleucine to tRNA(Ile). As IleRS can inadvertently accommodate and process structurally similar amino acids such as valine, to avoid such errors it has two additional distinct tRNA(Ile)-dependent editing activities. One activity is designated as 'pretransfer' editing and involves the hydrolysis of activated Val-AMP. The other activity is designated 'posttransfer' editing and involves deacylation of mischarged Val-tRNA(Ile). This Streptococcus thermophilus (strain CNRZ 1066) protein is Isoleucine--tRNA ligase.